The primary structure comprises 1192 residues: Reticulon-4 (1192 aa).

Met-1 bears the N-acetylmethionine mark. The disordered stretch occupies residues 1–204; it reads MEDLDQSPLV…ASEPVIRSSA (204 aa). At 1-1018 the chain is on the cytoplasmic side; that stretch reads MEDLDQSPLV…LYWRDIKKTG (1018 aa). Residues Ser-7 and Ser-15 each carry the phosphoserine modification. Acidic residues predominate over residues 31-53; the sequence is PEDEEEEEEEEEEDEDEDLEELE. Residues 65–77 are compositionally biased toward low complexity; the sequence is AAPVPTAPAAGAP. Residues 87–101 show a composition bias toward pro residues; it reads PPAPRGPLPAAPPVA. Residue Ser-107 is modified to Phosphoserine. A compositionally biased stretch (low complexity) spans 110–132; that stretch reads PSPVSSTVPAPSPLSAAAVSPSK. Positions 141–150 are enriched in pro residues; it reads ARPPPPPPAS. The residue at position 152 (Ser-152) is a Phosphoserine. Residues 159–173 show a composition bias toward pro residues; that stretch reads WTPPAPAPAAPPSTP. 5 positions are modified to phosphoserine: Ser-181, Ser-182, Ser-184, Ser-361, and Ser-446. The interval 427–458 is disordered; it reads DSLEQTNHEKDSESSNDDTSFPSTPEGIKDRS. Thr-450 carries the phosphothreonine modification. Ser-511 is modified (phosphoserine). A compositionally biased stretch (basic and acidic residues) spans 722–734; that stretch reads AKVEQPVPDHSEL. A disordered region spans residues 722-762; it reads AKVEQPVPDHSELVEDSSPDSEPVDLFSDDSIPDVPQKQDE. Residues 735-753 are compositionally biased toward acidic residues; the sequence is VEDSSPDSEPVDLFSDDSI. Ser-749 carries the post-translational modification Phosphoserine. Thr-858 is modified (phosphothreonine). Ser-881 and Ser-991 each carry phosphoserine. The region spanning 1005–1192 is the Reticulon domain; it reads VVDLLYWRDI…KIPGLKRKAE (188 aa). The helical transmembrane segment at 1019–1039 threads the bilayer; that stretch reads VVFGASLFLLLSLTVFSIVSV. Over 1040–1133 the chain is Lumenal; the sequence is TAYIALALLS…LMWVFTYVGA (94 aa). An N6-acetyllysine modification is found at Lys-1104. The chain crosses the membrane as a helical span at residues 1134–1154; the sequence is LFNGLTLLILALISLFSVPVI. Over 1155 to 1192 the chain is Cytoplasmic; that stretch reads YERHQAQIDHYLGLANKNVKDAMAKIQAKIPGLKRKAE.

Binds to RTN4R. Interacts with ATL1. Interacts with TMEM170A. Interacts with RTN4IP1. As to quaternary structure, interacts in trans with CNTNAP1. Interacts with REEP5. Interacts with synaptic plasticity regulator PANTS; the interaction results in enhanced RTN4-mediated inhibition of AMPA receptor clustering. Interacts with GPR50. In terms of assembly, homodimer. Interacts with BAD/Bcl-xl and BCL2. Interact with RTN3. Interacts with NGBR. Interacts with SPTLC1. Interacts with GRAMD4. Interacts with CDH5. Interacts with BACE1 and BACE2. Interacts with REEP5. Interacts with RETREG3. Interacts with BACE1 and BACE2. Interacts with TMEM33. As to expression, isoform A: is specifically expressed in brain and testis and weakly in heart and skeletal muscle. Isoform B: widely expressed except for the liver. Highly expressed in endothelial cells and vascular smooth muscle cells, including blood vessels and mesenteric arteries. Isoform C: is expressed in brain, skeletal muscle and adipocytes. Isoform D is testis-specific.

The protein resides in the endoplasmic reticulum membrane. It is found in the cell membrane. Its subcellular location is the synapse. The protein localises to the cell junction. In terms of biological role, required to induce the formation and stabilization of endoplasmic reticulum (ER) tubules. They regulate membrane morphogenesis in the ER by promoting tubular ER production. They influence nuclear envelope expansion, nuclear pore complex formation and proper localization of inner nuclear membrane proteins. However each isoform have specific functions mainly depending on their tissue expression specificities. Its function is as follows. Developmental neurite growth regulatory factor with a role as a negative regulator of axon-axon adhesion and growth, and as a facilitator of neurite branching. Regulates neurite fasciculation, branching and extension in the developing nervous system. Involved in down-regulation of growth, stabilization of wiring and restriction of plasticity in the adult CNS. Regulates the radial migration of cortical neurons via an RTN4R-LINGO1 containing receptor complex. Acts as a negative regulator of central nervous system angiogenesis. Inhibits spreading, migration and sprouting of primary brain microvascular endothelial cells (MVECs). Also induces the retraction of MVECs lamellipodia and filopodia in a ROCK pathway-dependent manner. Functionally, mainly function in endothelial cells and vascular smooth muscle cells, is also involved in immune system regulation. Modulator of vascular remodeling, promotes the migration of endothelial cells but inhibits the migration of vascular smooth muscle cells. Regulates endothelial sphingolipid biosynthesis with direct effects on vascular function and blood pressure. Inhibits serine palmitoyltransferase, SPTLC1, the rate-limiting enzyme of the novo sphingolipid biosynthetic pathway, thereby controlling production of endothelial sphingosine-1-phosphate (S1P). Required to promote macrophage homing and functions such as cytokine/chemokine gene expression involved in angiogenesis, arteriogenesis and tissue repair. Mediates ICAM1 induced transendothelial migration of leukocytes such as monocytes and neutrophils and acute inflammation. Necessary for immune responses triggered by nucleic acid sensing TLRs, such as TLR9, is required for proper TLR9 location to endolysosomes. Also involved in immune response to LPS. Plays a role in liver regeneration through the modulation of hepatocytes proliferation. Reduces the anti-apoptotic activity of Bcl-xl and Bcl-2. This is likely consecutive to their change in subcellular location, from the mitochondria to the endoplasmic reticulum, after binding and sequestration. With isoform C, inhibits BACE1 activity and amyloid precursor protein processing. Regulates cardiomyocyte apoptosis upon hypoxic conditions. With isoform B, inhibits BACE1 activity and amyloid precursor protein processing. This chain is Reticulon-4, found in Homo sapiens (Human).